The primary structure comprises 198 residues: uncharacterized protein (198 aa).

An HTH tetR-type domain is found at 11-71 (EGTHKAILSA…DSFLSTATDR (61 aa)). A DNA-binding region (H-T-H motif) is located at residues 34-53 (TVDKIAERAKVSKATIYKWW).

This is an uncharacterized protein from Bacillus subtilis (strain 168).